The sequence spans 153 residues: CASP-like protein 5B1 (153 aa).

The Cytoplasmic portion of the chain corresponds to 1-20 (MRELAGSPGTWSGLSLRVGQ). The chain crosses the membrane as a helical span at residues 21–41 (LVFAAASVCATASALGFAAYT). Position 42 (A42) is a topological domain, extracellular. The chain crosses the membrane as a helical span at residues 43-63 (FCYLIASMGLQALWSLGLACL). Residues 64–76 (DCYALKFKKDLHS) lie on the Cytoplasmic side of the membrane. The chain crosses the membrane as a helical span at residues 77-97 (AVLLSLFVVGDWVTAILSFAA). At 98–128 (SCSAAGVVVLFDRDIYACRNPQLPCGRFELA) the chain is on the extracellular side. Residues 129–149 (IACAFLSWAFSATSALVMFWL) traverse the membrane as a helical segment. Residues 150-153 (LASL) are Cytoplasmic-facing.

This sequence belongs to the Casparian strip membrane proteins (CASP) family. As to quaternary structure, homodimer and heterodimers.

It is found in the cell membrane. The sequence is that of CASP-like protein 5B1 from Oryza sativa subsp. indica (Rice).